Here is a 221-residue protein sequence, read N- to C-terminus: Veficolin-1 (221 aa).

A signal peptide spans 1–25 (MTAWLDFPLALSPLVVVSMKGGSFG). The 55-residue stretch at 50–104 (QGQAGIPGIPGVPGTNGLPGAKGDLGPQGPPGERGSTGIPGKAGPKGDKGDQGEA) folds into the Collagen-like domain. Residues 54–104 (GIPGIPGVPGTNGLPGAKGDLGPQGPPGERGSTGIPGKAGPKGDKGDQGEA) form a disordered region. Residues 111–221 (QQQEAGAKDC…DFNNSKTFAK (111 aa)) form the Fibrinogen C-terminal domain. Cys-120 and Cys-148 are joined by a disulfide.

Belongs to the ficolin lectin family. Veficolin subfamily. Expressed by the mandibular venom duct.

The protein localises to the secreted. In terms of biological role, initiates complement activation and/or interferes in platelet aggregation and/or blood coagulation. The sequence is that of Veficolin-1 from Varanus komodoensis (Komodo dragon).